Reading from the N-terminus, the 565-residue chain is Sulfite reductase [NADPH] hemoprotein beta-component (565 aa).

[4Fe-4S] cluster contacts are provided by Cys429, Cys435, Cys474, and Cys478. Cys478 contacts siroheme.

It belongs to the nitrite and sulfite reductase 4Fe-4S domain family. As to quaternary structure, alpha(8)-beta(8). The alpha component is a flavoprotein, the beta component is a hemoprotein. Siroheme is required as a cofactor. The cofactor is [4Fe-4S] cluster.

The catalysed reaction is hydrogen sulfide + 3 NADP(+) + 3 H2O = sulfite + 3 NADPH + 4 H(+). It participates in sulfur metabolism; hydrogen sulfide biosynthesis; hydrogen sulfide from sulfite (NADPH route): step 1/1. Functionally, component of the sulfite reductase complex that catalyzes the 6-electron reduction of sulfite to sulfide. This is one of several activities required for the biosynthesis of L-cysteine from sulfate. The protein is Sulfite reductase [NADPH] hemoprotein beta-component of Shewanella sp. (strain MR-4).